We begin with the raw amino-acid sequence, 122 residues long: RING-box protein 1B (122 aa).

Over residues M1–P23 the composition is skewed to acidic residues. The segment at M1–G28 is disordered. C57, C60, C68, C71, C82, C89, H91, H94, H96, C108, and D111 together coordinate Zn(2+). An RING-type zinc finger spans residues C57 to N112.

Belongs to the RING-box family. Part of a SCF complex consisting of Skpa (SKP1), Cul1, Roc1B and a F-box protein. Highly expressed in early embryos, and in pupae. Widely expressed in adult males, while it is weakly expressed in adult females.

It is found in the cytoplasm. The protein localises to the nucleus. It participates in protein modification; protein ubiquitination. In terms of biological role, component of the SCF (SKP1-CUL1-F-box protein) E3 ubiquitin ligase complex, which mediates the ubiquitination and subsequent proteasomal degradation of target proteins. Through the RING-type zinc finger, seems to recruit the E2 ubiquitination enzyme to the complex and brings it into close proximity to the substrate. The sequence is that of RING-box protein 1B (Roc1b) from Drosophila melanogaster (Fruit fly).